A 246-amino-acid polypeptide reads, in one-letter code: Acetoacetate decarboxylase (246 aa).

K116 acts as the Schiff-base intermediate with acetoacetate in catalysis.

The protein belongs to the ADC family.

The enzyme catalyses acetoacetate + H(+) = acetone + CO2. Catalyzes the conversion of acetoacetate to acetone and carbon dioxide. The sequence is that of Acetoacetate decarboxylase from Burkholderia lata (strain ATCC 17760 / DSM 23089 / LMG 22485 / NCIMB 9086 / R18194 / 383).